Consider the following 411-residue polypeptide: DSEFAELKIRGKIFKLPILKASIGEDVINISRVSAEADCFTYDPGFMSTASCQSTITYIDGDKGILRHRGYDIKDLAEKSDFLEVAYLLIYGELPSSEQYNNFTKQVAHHSLVNERLHYLFQTFCSSSHPMAIMLAAVGSLSAFYPDLLNCKEADYKLTAIRMIAKIPTIAAMSYKYSIGQPFIYPDNSLDFTENFLHMMFATPCTKYKVNPIIKNALNKIFILHADHEQNASTSTVRIAGSSGANPFACISTGIASLWGPAHGGANEAVINMLKEIGSSENIPKYIAKAKDKNDPFRLIGFGHRVYKNYDPRAAVLKETCKEVLKELGQLENNPLLQIAIELEAIALKDEYFIERKLYPNVDFYSGIIYKAMGIPSQMFTVLFAIARTIGWMAQWKEMHGDPEQKISRPR.

Catalysis depends on residues histidine 304 and aspartate 363.

The protein belongs to the citrate synthase family.

The catalysed reaction is oxaloacetate + acetyl-CoA + H2O = citrate + CoA + H(+). It functions in the pathway carbohydrate metabolism; tricarboxylic acid cycle; isocitrate from oxaloacetate: step 1/2. This is Citrate synthase (gltA) from Rickettsia helvetica.